A 411-amino-acid chain; its full sequence is Carbohydrate sulfotransferase 1 (411 aa).

Methionine 1 is a topological domain (cytoplasmic). The helical; Signal-anchor for type II membrane protein transmembrane segment at 2–23 (QCSWKAVLLLALASIAIQYTAI) threads the bilayer. Residues 24 to 411 (RTFTAKSFHT…VEERDFRPFL (388 aa)) lie on the Lumenal side of the membrane. N-linked (GlcNAc...) asparagine glycosylation is present at asparagine 56. 3'-phosphoadenylyl sulfate is bound at residue 69-75 (TRSGSSF). 2 N-linked (GlcNAc...) asparagine glycosylation sites follow: asparagine 145 and asparagine 189. 234-242 (RDPRGILAS) is a 3'-phosphoadenylyl sulfate binding site. N-linked (GlcNAc...) asparagine glycosylation is present at asparagine 334. A Cell attachment site motif is present at residues 337–339 (RGD).

The protein belongs to the sulfotransferase 1 family. Gal/GlcNAc/GalNAc subfamily.

It is found in the golgi apparatus membrane. The catalysed reaction is 3'-phosphoadenylyl sulfate + keratan = adenosine 3',5'-bisphosphate + keratan 6'-sulfate.. Its pathway is glycan metabolism. Its function is as follows. Sulfotransferase that utilizes 3'-phospho-5'-adenylyl sulfate (PAPS) as sulfonate donor to catalyze the transfer of sulfate to position 6 of internal galactose (Gal) residues of keratan. Cooperates with B4GALT4 and B3GNT7 glycosyltransferases and CHST6 sulfotransferase to construct and elongate disulfated disaccharide unit [-&gt;3(6-sulfoGalbeta)1-&gt;4(6-sulfoGlcNAcbeta)1-&gt;] within keratan sulfate polymer. Has a preference for sulfating keratan sulfate, but it also transfers sulfate to the unsulfated polymer. Involved in biosynthesis of phosphacan, a major keratan sulfate proteoglycan in the developing brain. Involved in biosynthesis of 6-sulfoGalbeta-containing O-linked glycans in high endothelial venules of lymph nodes. May act in a synergistic manner with CHST4 to generate sialyl 6',6-disulfo Lewis X motif, a recognition determinant for immune cell receptors implicated in leukocyte trafficking. Catalyzes sulfation of N-acetyllactosamine (LacNAc) oligosaccharides with highest efficiency for sialylated LacNAc structures. The protein is Carbohydrate sulfotransferase 1 (Chst1) of Rattus norvegicus (Rat).